The chain runs to 156 residues: Endoribonuclease YbeY (156 aa).

3 residues coordinate Zn(2+): histidine 122, histidine 126, and histidine 132.

It belongs to the endoribonuclease YbeY family. It depends on Zn(2+) as a cofactor.

Its subcellular location is the cytoplasm. In terms of biological role, single strand-specific metallo-endoribonuclease involved in late-stage 70S ribosome quality control and in maturation of the 3' terminus of the 16S rRNA. The protein is Endoribonuclease YbeY of Geobacillus thermodenitrificans (strain NG80-2).